We begin with the raw amino-acid sequence, 952 residues long: Eukaryotic translation initiation factor 3 subunit A (952 aa).

The region spanning 315–491 is the PCI domain; sequence HAERAGIVND…QTITFVSTPP (177 aa). Residues 522-849 adopt a coiled-coil conformation; it reads DAFAAAIAQA…RRQAEKAAAT (328 aa). Positions 757 to 797 are enriched in basic and acidic residues; that stretch reads EKVIKRKREEKERKLKEAREAEERKRKEEEEAAQKAEEEAR. Residues 757–952 are disordered; that stretch reads EKVIKRKREE…RGMPSTRGGA (196 aa). A compositionally biased stretch (low complexity) spans 798–809; it reads AAAALEAEAAAA. A compositionally biased stretch (basic and acidic residues) spans 810-844; it reads EQRRAEREAQRQSDLERIRAQQEREEEALRRRQAE. Low complexity-rich tracts occupy residues 856–878 and 893–918; these read RPPA…GGPS and GAPV…SNGP.

It belongs to the eIF-3 subunit A family. Component of the eukaryotic translation initiation factor 3 (eIF-3) complex.

It is found in the cytoplasm. Functionally, RNA-binding component of the eukaryotic translation initiation factor 3 (eIF-3) complex, which is involved in protein synthesis of a specialized repertoire of mRNAs and, together with other initiation factors, stimulates binding of mRNA and methionyl-tRNAi to the 40S ribosome. The eIF-3 complex specifically targets and initiates translation of a subset of mRNAs involved in cell proliferation. This is Eukaryotic translation initiation factor 3 subunit A from Cryptococcus neoformans var. neoformans serotype D (strain B-3501A) (Filobasidiella neoformans).